The sequence spans 610 residues: Elongation factor 4 (610 aa).

In terms of domain architecture, tr-type G spans K15–K197. GTP-binding positions include D27–T32 and N144–D147.

Belongs to the TRAFAC class translation factor GTPase superfamily. Classic translation factor GTPase family. LepA subfamily.

Its subcellular location is the cell membrane. The enzyme catalyses GTP + H2O = GDP + phosphate + H(+). Its function is as follows. Required for accurate and efficient protein synthesis under certain stress conditions. May act as a fidelity factor of the translation reaction, by catalyzing a one-codon backward translocation of tRNAs on improperly translocated ribosomes. Back-translocation proceeds from a post-translocation (POST) complex to a pre-translocation (PRE) complex, thus giving elongation factor G a second chance to translocate the tRNAs correctly. Binds to ribosomes in a GTP-dependent manner. The protein is Elongation factor 4 of Buchnera aphidicola subsp. Acyrthosiphon pisum (strain 5A).